The primary structure comprises 245 residues: NADH-quinone oxidoreductase subunit C (245 aa).

Over residues M1–D10 the composition is skewed to basic and acidic residues. Disordered stretches follow at residues M1–G54 and P216–Q245. Residues G11–A28 are compositionally biased toward low complexity. Residues G39–G54 are compositionally biased toward gly residues.

Belongs to the complex I 30 kDa subunit family. In terms of assembly, NDH-1 is composed of 14 different subunits. Subunits NuoB, C, D, E, F, and G constitute the peripheral sector of the complex.

The protein resides in the cell membrane. The catalysed reaction is a quinone + NADH + 5 H(+)(in) = a quinol + NAD(+) + 4 H(+)(out). In terms of biological role, NDH-1 shuttles electrons from NADH, via FMN and iron-sulfur (Fe-S) centers, to quinones in the respiratory chain. The immediate electron acceptor for the enzyme in this species is believed to be a menaquinone. Couples the redox reaction to proton translocation (for every two electrons transferred, four hydrogen ions are translocated across the cytoplasmic membrane), and thus conserves the redox energy in a proton gradient. In Salinispora tropica (strain ATCC BAA-916 / DSM 44818 / JCM 13857 / NBRC 105044 / CNB-440), this protein is NADH-quinone oxidoreductase subunit C.